The chain runs to 459 residues: tRNA(Ile2) 2-agmatinylcytidine synthetase TiaS (459 aa).

Residues 282 to 360 (VRVRVWVASI…TINLEKLHII (79 aa)) constitute a DNA-binding region (OB).

This sequence belongs to the TiaS family.

Its subcellular location is the cytoplasm. It carries out the reaction cytidine(34) in tRNA(Ile2) + agmatine + ATP + H2O = 2-agmatinylcytidine(34) in tRNA(Ile2) + AMP + 2 phosphate + 2 H(+). ATP-dependent agmatine transferase that catalyzes the formation of 2-agmatinylcytidine (agm2C) at the wobble position (C34) of tRNA(Ile2), converting the codon specificity from AUG to AUA. This is tRNA(Ile2) 2-agmatinylcytidine synthetase TiaS from Staphylothermus marinus (strain ATCC 43588 / DSM 3639 / JCM 9404 / F1).